The following is a 366-amino-acid chain: Sperm equatorial segment protein 1 (366 aa).

The signal sequence occupies residues Met1–Pro18. Residue Asn129 is glycosylated (N-linked (GlcNAc...) asparagine). The segment at Pro139–Asn204 is disordered. Residues Asp144–Glu157 show a composition bias toward acidic residues. Polar residues predominate over residues Ala165–Gly189.

Belongs to the SPESP1 family. Post-translationally, glycosylated. In testis there are two predominant forms of 77- and 67-kDa and a form of 47-kDa, whereas in epididymal sperm from caput, corpus, and cauda there are two forms of 47- and 43-kDa. Testis forms contain complex carbohydrate residues. Epididymal sperm forms are N-glycosylated. Then undergoes significant glycosylation in the testis and that the majority of these glycoconjugates are removed by the time sperm reach the caput epididymis.

The protein resides in the cytoplasmic vesicle. The protein localises to the secretory vesicle. It is found in the acrosome. Involved in fertilization ability of sperm. This Bos taurus (Bovine) protein is Sperm equatorial segment protein 1.